Reading from the N-terminus, the 43-residue chain is Bacteriocin weissellin-A (43 aa).

A disulfide bridge connects residues Cys9 and Cys14.

It localises to the secreted. Its function is as follows. Highly active against Gram-positive bacteria M.flavus strain ATCC 400, M.luteus strain CECT241, C.soprogenes strain NCTC533, L.monocytogenes strain ATCC 19111, L.inocua strain ATCC BAA-680D and S.carnosus strain LMG13564. Less active against B.cereus strain LMG13569, C.thiaminolyticum strain ATCC 15579, E.faecalis strain NCTC8176, L.lactis strain LM0230, L.casei strain ATCC 344, L.lactis strain IL1403, L.jensenii strain ATCC 25258, L.plantarum strain CECT220, L.brevis strain ATCC 8287, L.bulgaricus strain LMG13551, P.acidilactici strain ATCC 25740, P.pentosaceus strain ATCC 33316 and P.pentosaceus strain LMG13560. Weakly active against L.mesenteroides strain ATCC 19254, L.lactis strain ATCC 1454, L.sakei strain CECT906T, L.lactis subsp. cremoris strain MC1363 and L.curvatus strain ATCC 51436. Not active against Gram-negative bacterium S.enteritidis strain ATCC 13076. The mode of action appears to be non-lytic. Inactivated by proteinase K, but insensitive to trypsin, alpha-chymotrypsin, pepsin and papain. The sequence is that of Bacteriocin weissellin-A from Weissella paramesenteroides (Leuconostoc paramesenteroides).